The chain runs to 92 residues: Small ribosomal subunit protein uS19 (92 aa).

This sequence belongs to the universal ribosomal protein uS19 family.

Its function is as follows. Protein S19 forms a complex with S13 that binds strongly to the 16S ribosomal RNA. The chain is Small ribosomal subunit protein uS19 from Phenylobacterium zucineum (strain HLK1).